We begin with the raw amino-acid sequence, 409 residues long: uncharacterized protein (409 aa).

A run of 10 helical transmembrane segments spans residues 22–42 (ILII…VIPA), 58–78 (LGII…VVGW), 99–119 (GILG…VFFI), 174–194 (FGAV…MYIA), 217–237 (NTAI…LIFA), 266–286 (SYIF…GPLA), 293–312 (FVIL…LPFA), 316–338 (LAYG…TVVY), 353–373 (LTVG…GALI), and 378–398 (LTPT…AFLL).

Belongs to the major facilitator superfamily.

The protein resides in the cell membrane. This is an uncharacterized protein from Bacillus subtilis (strain 168).